The chain runs to 449 residues: Chromosomal replication initiator protein DnaA (449 aa).

A domain I, interacts with DnaA modulators region spans residues 1–72 (MENIHDLWER…SETIDDLTGV (72 aa)). Residues 72–111 (VRLYPKFVIPTSQLDEPFVEQELKKPMKQPPAQNGEMPNN) are domain II. Residues 112 to 328 (MLNDKYTFDT…GALIRVVAYS (217 aa)) form a domain III, AAA+ region region. Residues Gly156, Gly158, Lys159, and Thr160 each contribute to the ATP site. Positions 329–449 (SLINQDMNAD…IQDISDKLRS (121 aa)) are domain IV, binds dsDNA.

Belongs to the DnaA family. As to quaternary structure, oligomerizes as a right-handed, spiral filament on DNA at oriC.

The protein localises to the cytoplasm. Its function is as follows. Plays an essential role in the initiation and regulation of chromosomal replication. ATP-DnaA binds to the origin of replication (oriC) to initiate formation of the DNA replication initiation complex once per cell cycle. Binds the DnaA box (a 9 base pair repeat at the origin) and separates the double-stranded (ds)DNA. Forms a right-handed helical filament on oriC DNA; dsDNA binds to the exterior of the filament while single-stranded (ss)DNA is stabiized in the filament's interior. The ATP-DnaA-oriC complex binds and stabilizes one strand of the AT-rich DNA unwinding element (DUE), permitting loading of DNA polymerase. After initiation quickly degrades to an ADP-DnaA complex that is not apt for DNA replication. Binds acidic phospholipids. The chain is Chromosomal replication initiator protein DnaA from Halalkalibacterium halodurans (strain ATCC BAA-125 / DSM 18197 / FERM 7344 / JCM 9153 / C-125) (Bacillus halodurans).